A 402-amino-acid polypeptide reads, in one-letter code: CCA-adding enzyme (402 aa).

Residues Gly32 and Arg35 each contribute to the ATP site. Gly32 and Arg35 together coordinate CTP. The Mg(2+) site is built by Asp45 and Asp47. Residues Arg116, Asp159, Arg162, Arg165, and Arg168 each contribute to the ATP site. CTP-binding residues include Arg116, Asp159, Arg162, Arg165, and Arg168.

The protein belongs to the tRNA nucleotidyltransferase/poly(A) polymerase family. Bacterial CCA-adding enzyme type 3 subfamily. Homodimer. It depends on Mg(2+) as a cofactor.

The enzyme catalyses a tRNA precursor + 2 CTP + ATP = a tRNA with a 3' CCA end + 3 diphosphate. The catalysed reaction is a tRNA with a 3' CCA end + 2 CTP + ATP = a tRNA with a 3' CCACCA end + 3 diphosphate. Catalyzes the addition and repair of the essential 3'-terminal CCA sequence in tRNAs without using a nucleic acid template. Adds these three nucleotides in the order of C, C, and A to the tRNA nucleotide-73, using CTP and ATP as substrates and producing inorganic pyrophosphate. tRNA 3'-terminal CCA addition is required both for tRNA processing and repair. Also involved in tRNA surveillance by mediating tandem CCA addition to generate a CCACCA at the 3' terminus of unstable tRNAs. While stable tRNAs receive only 3'-terminal CCA, unstable tRNAs are marked with CCACCA and rapidly degraded. The protein is CCA-adding enzyme of Streptococcus pyogenes serotype M3 (strain ATCC BAA-595 / MGAS315).